The primary structure comprises 514 residues: Acetylcholine receptor subunit gamma (514 aa).

The N-terminal stretch at 1–22 is a signal peptide; the sequence is MRCSDLLLLFLLALCVLPGISC. At 23-241 the chain is on the extracellular side; the sequence is RNQEEKLLQD…VIFYLIIQRK (219 aa). C150 and C164 form a disulfide bridge. N163 is a glycosylation site (N-linked (GlcNAc...) asparagine). 3 consecutive transmembrane segments (helical) span residues 242 to 266, 275 to 293, and 309 to 330; these read PLFY…VYFL, CTVS…FLIA, and YLTF…VLNV. The Cytoplasmic portion of the chain corresponds to 331 to 473; it reads SLRTPNTHSM…WILVGRVIDR (143 aa). Position 386 is a phosphotyrosine; by Tyr-kinases (Y386). Residues 474-494 traverse the membrane as a helical segment; sequence VCFFIMASLFVCGTIGIFLMA.

Belongs to the ligand-gated ion channel (TC 1.A.9) family. Acetylcholine receptor (TC 1.A.9.1) subfamily. Gamma/CHRNG sub-subfamily. In terms of assembly, pentamer of two alpha chains, and one each of the beta, delta, and gamma chains.

Its subcellular location is the postsynaptic cell membrane. It is found in the cell membrane. The catalysed reaction is K(+)(in) = K(+)(out). The enzyme catalyses Na(+)(in) = Na(+)(out). Functionally, after binding acetylcholine, the AChR responds by an extensive change in conformation that affects all subunits and leads to opening of an ion-conducting channel across the plasma membrane. In Gallus gallus (Chicken), this protein is Acetylcholine receptor subunit gamma (CHRNG).